The primary structure comprises 327 residues: MTITLTENKRKSMEKLSIDGVISALAFDQRGALKRMMAQHQTKEPTVEQIEELKSLVSEELTPFASSILLDPEYGLPASRVRSEEAGLLLAYEKTGYDATTTSRLPDCLDVWSAKRIKEAGAEAVKFLLYYDIDGDQDVNEQKKAYIERIGSECRAEDIPFYLEILTYDEKIADNASPEFAKVKAHKVNEAMKVFSKERFGVDVLKVEVPVNMKFVEGFADGEILFTKEEAAQAFRDQEASTDLPYIYLSAGVSAKLFQDTLVFAAESGAKFNGVLCGRATWAGSVKVYIEEGPQAAREWLRTEGFKNIDELNKVLDKTASPWTEKM.

This sequence belongs to the aldolase LacD family.

It carries out the reaction D-tagatofuranose 1,6-bisphosphate = D-glyceraldehyde 3-phosphate + dihydroxyacetone phosphate. It participates in carbohydrate metabolism; D-tagatose 6-phosphate degradation; D-glyceraldehyde 3-phosphate and glycerone phosphate from D-tagatose 6-phosphate: step 2/2. The sequence is that of Tagatose 1,6-diphosphate aldolase 2 from Streptococcus pyogenes serotype M6 (strain ATCC BAA-946 / MGAS10394).